We begin with the raw amino-acid sequence, 535 residues long: Cytochrome P450 monooxygenase BOA7 (535 aa).

A helical transmembrane segment spans residues 20-37; the sequence is SIFLILGFFVLAAILIAW. Residues asparagine 65, asparagine 148, asparagine 180, and asparagine 420 are each glycosylated (N-linked (GlcNAc...) asparagine). Cysteine 478 serves as a coordination point for heme.

Belongs to the cytochrome P450 family. Requires heme as cofactor.

The protein localises to the membrane. Its pathway is polyketide biosynthesis. Functionally, cytochrome P450 monooxygenase; part of the gene cluster B that mediates the biosynthesis of botcinic acid and its botcinin derivatives, acetate-derived polyketides that contribute to virulence when combined with the sesquiterpene botrydial. Botcinic acid and its derivatives have been shown to induce chlorosis and necrosis during host plant infection, but also have antifungal activities. Two polyketide synthases, BOA6 and BOA9, are involved in the biosynthesis of botcinins. BOA6 mediates the formation of the per-methylated tetraketide core by condensation of four units of malonyl-CoA with one unit of acetyl-CoA, which would be methylated in activated methylene groups to yield a bicyclic acid intermediate that could then either be converted to botrylactone derivatives or lose the starter acetate unit through a retro-Claisen type C-C bond cleavage to yield botcinin derivatives. The second polyketide synthase, BOA9, is probably required for the biosynthesis of the tetraketide side chain of botcinins. The methyltransferase (MT) domain within BOA6 is probably responsible for the incorporation of four methyl groups. The trans-enoyl reductase BOA5 might take over the enoyl reductase function of BOA6 that misses an ER domain. The monooxygenases BOA2, BOA3 and BOA4 might be involved in further hydroxylations at C4, C5 and C8, whereas BOA7, close to BOA9, could potentially be involved in the hydroxylation at C4 in the side chain of botcinins. This Botryotinia fuckeliana (strain B05.10) (Noble rot fungus) protein is Cytochrome P450 monooxygenase BOA7.